Consider the following 151-residue polypeptide: Tetratricopeptide repeat protein 32 (151 aa).

3 TPR repeats span residues 8-41 (SHAT…CACA), 58-91 (ATAY…QPNF), and 92-125 (EVPY…NPGF).

This Homo sapiens (Human) protein is Tetratricopeptide repeat protein 32 (TTC32).